The sequence spans 508 residues: Bestrophin-2 (508 aa).

The Cytoplasmic segment spans residues 1–31; sequence MTVTYTARVANARFGGFSQLLLLWRGSIYKL. Ala10 lines the Ca(2+) pocket. A helical membrane pass occupies residues 32 to 51; the sequence is LWRELLCFLGLYMALSAAYR. Residues 52-60 lie on the Extracellular side of the membrane; the sequence is FLLAEEQKR. A helical transmembrane segment spans residues 61–82; it reads YFEKLVIYCDQYASLIPVSFVL. Residues 83-238 lie on the Cytoplasmic side of the membrane; it reads GFYVTLVVHR…WISIPLVYTQ (156 aa). A helical transmembrane segment spans residues 239-255; sequence VVTIAVYSYFLACLIGR. Over 256–274 the chain is Extracellular; sequence QFLDPAQGYKDHTLDLCVP. The chain crosses the membrane as a helical span at residues 275 to 288; sequence IFTLLQFFFYAGWL. The Cytoplasmic portion of the chain corresponds to 289–508; sequence KVAEQLINPF…PIGEEEESPA (220 aa). The Ca(2+) site is built by Gln293, Asn296, Asp301, and Asp304. The disordered stretch occupies residues 455 to 508; that stretch reads LREPELEPPACPEPPAPIPGPTPEPFTTVSIPGPRAPAPPWLPSPIGEEEESPA. Composition is skewed to pro residues over residues 461–478 and 488–497; these read EPPA…PTPE and PRAPAPPWLP.

The protein belongs to the anion channel-forming bestrophin (TC 1.A.46) family. Calcium-sensitive chloride channel subfamily. Pentamer. Interacts with GLUL; this interaction tethers a fraction of GLUL to the membrane, causing a decrease of cytosolic glutamine synthase (GS) activity and inhibits the chloride channel activity of BEST2 by affecting the gating at the aperture in the absence of intracellular glutamate. As to expression, expressed in mucin-secreting colonic goblet cells.

The protein localises to the cell membrane. Its subcellular location is the basolateral cell membrane. The catalysed reaction is chloride(in) = chloride(out). It carries out the reaction hydrogencarbonate(in) = hydrogencarbonate(out). It catalyses the reaction L-glutamate(out) = L-glutamate(in). The enzyme catalyses iodide(out) = iodide(in). The catalysed reaction is L-glutamine(out) = L-glutamine(in). Chloride channel activity is allosterically inhibited by GLUL/glutamine synthase (GS) which affects the gating at the aperture in the absence of intracellular glutamate. Inhibitory effect of GLUL is relieved upon increasing of intracellular level of L-glutamate. In terms of biological role, ligand-gated anion channel that allows the movement of anions across cell membranes when activated by calcium (Ca2+). Transports a large specter of anions, namely mediates the movement of chloride, L-glutamate and iodide. Calcium-binding triggers the dilation of the aperture, but calcium-dependent gating is only effective when the size of the passing anion is bigger than the closed aperture. Mediates the calcium-activated hydrogencarbonate movement and participates in colonic hydrogencarbonate secretion concomitant with mucin secretion. In non-pigmented epithelium (NPE), mediates the efflux of intracellular L-glutamate; binding of intracellular L-glutamate activates and open both the neck and the aperture of the channel, leading to L-glutamate exit promoting chloride influx movement from the extracellular side in trans. Also exhibits a directional permeability for intracellular glutamine, in a similar manner as for L-glutamate. The protein is Bestrophin-2 of Mus musculus (Mouse).